Reading from the N-terminus, the 81-residue chain is Photosystem I iron-sulfur center (81 aa).

2 consecutive 4Fe-4S ferredoxin-type domains span residues 2 to 31 (AHSV…MVPW) and 39 to 68 (IASA…VRVY). [4Fe-4S] cluster is bound by residues cysteine 11, cysteine 14, cysteine 17, cysteine 21, cysteine 48, cysteine 51, cysteine 54, and cysteine 58.

As to quaternary structure, the eukaryotic PSI reaction center is composed of at least 11 subunits. The cofactor is [4Fe-4S] cluster.

The protein localises to the plastid. It is found in the chloroplast thylakoid membrane. It carries out the reaction reduced [plastocyanin] + hnu + oxidized [2Fe-2S]-[ferredoxin] = oxidized [plastocyanin] + reduced [2Fe-2S]-[ferredoxin]. Apoprotein for the two 4Fe-4S centers FA and FB of photosystem I (PSI); essential for photochemical activity. FB is the terminal electron acceptor of PSI, donating electrons to ferredoxin. The C-terminus interacts with PsaA/B/D and helps assemble the protein into the PSI complex. Required for binding of PsaD and PsaE to PSI. PSI is a plastocyanin-ferredoxin oxidoreductase, converting photonic excitation into a charge separation, which transfers an electron from the donor P700 chlorophyll pair to the spectroscopically characterized acceptors A0, A1, FX, FA and FB in turn. This is Photosystem I iron-sulfur center from Gnetum gnemon (Spanish joint-fir).